The following is a 636-amino-acid chain: 1-deoxy-D-xylulose-5-phosphate synthase (636 aa).

Residues His-73 and Ser-114–Ala-116 contribute to the thiamine diphosphate site. A Mg(2+)-binding site is contributed by Asp-146. Thiamine diphosphate contacts are provided by residues Gly-147–Ala-148, Asn-176, Tyr-287, and Glu-368. Mg(2+) is bound at residue Asn-176.

It belongs to the transketolase family. DXPS subfamily. As to quaternary structure, homodimer. It depends on Mg(2+) as a cofactor. The cofactor is thiamine diphosphate.

The catalysed reaction is D-glyceraldehyde 3-phosphate + pyruvate + H(+) = 1-deoxy-D-xylulose 5-phosphate + CO2. The protein operates within metabolic intermediate biosynthesis; 1-deoxy-D-xylulose 5-phosphate biosynthesis; 1-deoxy-D-xylulose 5-phosphate from D-glyceraldehyde 3-phosphate and pyruvate: step 1/1. In terms of biological role, catalyzes the acyloin condensation reaction between C atoms 2 and 3 of pyruvate and glyceraldehyde 3-phosphate to yield 1-deoxy-D-xylulose-5-phosphate (DXP). This chain is 1-deoxy-D-xylulose-5-phosphate synthase, found in Corynebacterium glutamicum (strain ATCC 13032 / DSM 20300 / JCM 1318 / BCRC 11384 / CCUG 27702 / LMG 3730 / NBRC 12168 / NCIMB 10025 / NRRL B-2784 / 534).